A 148-amino-acid chain; its full sequence is Large ribosomal subunit protein uL15 (148 aa).

The interval 1 to 46 (MITIEDLKPTPGSNKKYKRLGRGQGSGKGKTAGKGHKGQKSRGTGK) is disordered. Residues 31–45 (TAGKGHKGQKSRGTG) are compositionally biased toward basic residues.

The protein belongs to the universal ribosomal protein uL15 family. In terms of assembly, part of the 50S ribosomal subunit.

Its function is as follows. Binds to the 23S rRNA. This Fervidobacterium nodosum (strain ATCC 35602 / DSM 5306 / Rt17-B1) protein is Large ribosomal subunit protein uL15.